Here is a 466-residue protein sequence, read N- to C-terminus: Phosphomethylpyrimidine synthase (466 aa).

Substrate contacts are provided by residues Asn80, Met109, Tyr139, His175, Ser195–Gly197, Asp236–Arg239, and Glu275. His279 contacts Zn(2+). Tyr302 serves as a coordination point for substrate. His343 provides a ligand contact to Zn(2+). Residues Cys423, Cys426, and Cys431 each contribute to the [4Fe-4S] cluster site.

Belongs to the ThiC family. The cofactor is [4Fe-4S] cluster.

The enzyme catalyses 5-amino-1-(5-phospho-beta-D-ribosyl)imidazole + S-adenosyl-L-methionine = 4-amino-2-methyl-5-(phosphooxymethyl)pyrimidine + CO + 5'-deoxyadenosine + formate + L-methionine + 3 H(+). It functions in the pathway cofactor biosynthesis; thiamine diphosphate biosynthesis. Catalyzes the synthesis of the hydroxymethylpyrimidine phosphate (HMP-P) moiety of thiamine from aminoimidazole ribotide (AIR) in a radical S-adenosyl-L-methionine (SAM)-dependent reaction. The polypeptide is Phosphomethylpyrimidine synthase (Prochlorococcus marinus (strain NATL1A)).